The following is a 243-amino-acid chain: 7-cyano-7-deazaguanine synthase (243 aa).

ATP is bound at residue 18 to 28 (FSGGQDSATCL). Cys-206, Cys-221, Cys-224, and Cys-227 together coordinate Zn(2+).

This sequence belongs to the QueC family. Zn(2+) serves as cofactor.

It carries out the reaction 7-carboxy-7-deazaguanine + NH4(+) + ATP = 7-cyano-7-deazaguanine + ADP + phosphate + H2O + H(+). It functions in the pathway purine metabolism; 7-cyano-7-deazaguanine biosynthesis. In terms of biological role, catalyzes the ATP-dependent conversion of 7-carboxy-7-deazaguanine (CDG) to 7-cyano-7-deazaguanine (preQ(0)). This chain is 7-cyano-7-deazaguanine synthase, found in Methylorubrum extorquens (strain PA1) (Methylobacterium extorquens).